The sequence spans 423 residues: ATP-dependent Clp protease ATP-binding subunit ClpX (423 aa).

Residues Met1–Leu50 enclose the ClpX-type ZB domain. Zn(2+) is bound by residues Cys9, Cys12, Cys31, and Cys34. Pro126 to Tyr133 provides a ligand contact to ATP.

The protein belongs to the ClpX chaperone family. Component of the ClpX-ClpP complex. Forms a hexameric ring that, in the presence of ATP, binds to fourteen ClpP subunits assembled into a disk-like structure with a central cavity, resembling the structure of eukaryotic proteasomes.

In terms of biological role, ATP-dependent specificity component of the Clp protease. It directs the protease to specific substrates. Can perform chaperone functions in the absence of ClpP. In Tropheryma whipplei (strain Twist) (Whipple's bacillus), this protein is ATP-dependent Clp protease ATP-binding subunit ClpX.